A 121-amino-acid chain; its full sequence is Phosphoribosyl-ATP pyrophosphatase (121 aa).

It belongs to the PRA-PH family.

It is found in the cytoplasm. It catalyses the reaction 1-(5-phospho-beta-D-ribosyl)-ATP + H2O = 1-(5-phospho-beta-D-ribosyl)-5'-AMP + diphosphate + H(+). It participates in amino-acid biosynthesis; L-histidine biosynthesis; L-histidine from 5-phospho-alpha-D-ribose 1-diphosphate: step 2/9. The chain is Phosphoribosyl-ATP pyrophosphatase from Burkholderia ambifaria (strain MC40-6).